We begin with the raw amino-acid sequence, 407 residues long: Probable endo-beta-1,4-glucanase celB (407 aa).

An N-terminal signal peptide occupies residues 1–18 (MAQTLAAASLVLVPLVTA). Residue Asn136 is glycosylated (N-linked (GlcNAc...) asparagine). Catalysis depends on Glu216, which acts as the Nucleophile. Glu221 acts as the Proton donor in catalysis.

The protein belongs to the glycosyl hydrolase 7 (cellulase C) family.

The protein resides in the secreted. The catalysed reaction is Endohydrolysis of (1-&gt;4)-beta-D-glucosidic linkages in cellulose, lichenin and cereal beta-D-glucans.. In terms of biological role, has endoglucanase activity on substrates containing beta-1,4 glycosidic bonds, like in carboxymethylcellulose (CMC), hydroxyethylcellulose (HEC) and beta-glucan. Involved in the degradation of complex natural cellulosic substrates. This is Probable endo-beta-1,4-glucanase celB (celB) from Aspergillus fumigatus (strain ATCC MYA-4609 / CBS 101355 / FGSC A1100 / Af293) (Neosartorya fumigata).